Here is a 133-residue protein sequence, read N- to C-terminus: Snaclec A9 (133 aa).

Disulfide bonds link Cys-4–Cys-15, Cys-32–Cys-131, and Cys-106–Cys-123. In terms of domain architecture, C-type lectin spans 11-132 (YEGHCYKVFN…CGQPYRFTCE (122 aa)).

This sequence belongs to the snaclec family. Heterodimer; disulfide-linked. In terms of tissue distribution, expressed by the venom gland.

It localises to the secreted. In terms of biological role, interferes with one step of hemostasis (modulation of platelet aggregation, or coagulation cascade, for example). The protein is Snaclec A9 of Macrovipera lebetinus (Levantine viper).